Reading from the N-terminus, the 63-residue chain is Iota-crystallin (63 aa).

It belongs to the calycin superfamily. Fatty-acid binding protein (FABP) family.

Functionally, binds vitamin A2 in the eye lens and thus functions as a UV filter. Intracellular transport of retinol. This Gonatodes vittatus (Wiegmann's striped gecko) protein is Iota-crystallin (CRBPI).